Here is a 95-residue protein sequence, read N- to C-terminus: Co-chaperonin GroES (95 aa).

Belongs to the GroES chaperonin family. In terms of assembly, heptamer of 7 subunits arranged in a ring. Interacts with the chaperonin GroEL.

It localises to the cytoplasm. Together with the chaperonin GroEL, plays an essential role in assisting protein folding. The GroEL-GroES system forms a nano-cage that allows encapsulation of the non-native substrate proteins and provides a physical environment optimized to promote and accelerate protein folding. GroES binds to the apical surface of the GroEL ring, thereby capping the opening of the GroEL channel. The protein is Co-chaperonin GroES of Desulforapulum autotrophicum (strain ATCC 43914 / DSM 3382 / VKM B-1955 / HRM2) (Desulfobacterium autotrophicum).